A 192-amino-acid chain; its full sequence is ATP-dependent Clp protease proteolytic subunit 1 (192 aa).

Ser92 serves as the catalytic Nucleophile. His117 is an active-site residue.

It belongs to the peptidase S14 family. Fourteen ClpP subunits assemble into 2 heptameric rings which stack back to back to give a disk-like structure with a central cavity, resembling the structure of eukaryotic proteasomes.

The protein localises to the cytoplasm. The catalysed reaction is Hydrolysis of proteins to small peptides in the presence of ATP and magnesium. alpha-casein is the usual test substrate. In the absence of ATP, only oligopeptides shorter than five residues are hydrolyzed (such as succinyl-Leu-Tyr-|-NHMec, and Leu-Tyr-Leu-|-Tyr-Trp, in which cleavage of the -Tyr-|-Leu- and -Tyr-|-Trp bonds also occurs).. Functionally, cleaves peptides in various proteins in a process that requires ATP hydrolysis. Has a chymotrypsin-like activity. Plays a major role in the degradation of misfolded proteins. The protein is ATP-dependent Clp protease proteolytic subunit 1 of Chlamydia abortus (strain DSM 27085 / S26/3) (Chlamydophila abortus).